Consider the following 48-residue polypeptide: Gas vesicle protein A (48 aa).

This sequence belongs to the gas vesicle GvpA family. As to quaternary structure, the gas vesicle shell is 2 nm thick and consists of a single layer of this protein. It forms helical ribs nearly perpendicular to the long axis of the vesicle.

The protein localises to the gas vesicle shell. In terms of biological role, gas vesicles are hollow, gas filled proteinaceous nanostructures found in some microorganisms. During planktonic growth they allow positioning of the organism at a favorable depth for light or nutrient acquisition. GvpA forms the protein shell. This Spirulina sp. (strain CCAP 1475/10) protein is Gas vesicle protein A.